A 166-amino-acid chain; its full sequence is Large ribosomal subunit protein uL10 (166 aa).

It belongs to the universal ribosomal protein uL10 family. Part of the ribosomal stalk of the 50S ribosomal subunit. The N-terminus interacts with L11 and the large rRNA to form the base of the stalk. The C-terminus forms an elongated spine to which L12 dimers bind in a sequential fashion forming a multimeric L10(L12)X complex.

Forms part of the ribosomal stalk, playing a central role in the interaction of the ribosome with GTP-bound translation factors. This is Large ribosomal subunit protein uL10 from Shouchella clausii (strain KSM-K16) (Alkalihalobacillus clausii).